A 794-amino-acid polypeptide reads, in one-letter code: Kinesin-like protein KIN-13A (794 aa).

Positions 193-526 constitute a Kinesin motor domain; the sequence is KIKVVVRKRP…LRYADRVKSL (334 aa). 282-289 serves as a coordination point for ATP; the sequence is GQTGSGKT. Residues 525 to 699 are disordered; the sequence is SLSKSGNSKK…YETASRQYET (175 aa). Residues 569 to 579 are compositionally biased toward basic and acidic residues; sequence ETRRRVVEKDS. Polar residues-rich tracts occupy residues 580 to 593 and 611 to 632; these read NSSTSGIDFRQPTN and EPNSSFAGSTSQRNNISSYPQE. Basic and acidic residues predominate over residues 650 to 668; that stretch reads GLREEKPDRPQNWSKRDVS. Polar residues predominate over residues 669–696; sequence SSDIPTLTNFRQNASETASRQYETASRQ. Residues 705–742 are a coiled coil; sequence ENLDALLEEEEALIAAHRKEIEDTMEIVREEMKLLAEV.

Belongs to the TRAFAC class myosin-kinesin ATPase superfamily. Kinesin family. KIN-13 subfamily. As to quaternary structure, component of the active ARAC10-IRC5-KIN13A complex. Interacts (via-C-terminus) with ICR2 and ICR5 (via N-terminus). No interactions with ICR1. In terms of tissue distribution, expressed in leaves, roots, young and mature seedlings. Preferentially expressed in the secondary cell wall pits of differentiating metaxylem vessel cells (at the protein level).

It is found in the golgi apparatus. The protein localises to the golgi stack. It localises to the cytoplasm. The protein resides in the cytoskeleton. Internal motor kinesin involved in trichome morphogenesis. Participates in regulating the formation of Golgi-associated vesicles. Plays a central role in microtubule disassembly via the active ARAC10-ICR5 cascade, which establishes the secondary cell wall pattern in metaxylem vessel cells. Acts redundantly with KIN13B to modulate cell wall synthesis and cell expansion via the THE1 pathway. The sequence is that of Kinesin-like protein KIN-13A from Arabidopsis thaliana (Mouse-ear cress).